Reading from the N-terminus, the 283-residue chain is Thymidylate synthase (283 aa).

DUMP is bound at residue Arg-22. Cys-160 (nucleophile) is an active-site residue. Residues 180 to 183 (RSCD), Asn-191, and 221 to 223 (HIY) contribute to the dUMP site. A (6R)-5,10-methylene-5,6,7,8-tetrahydrofolate-binding site is contributed by Asp-183. Ser-282 contributes to the (6R)-5,10-methylene-5,6,7,8-tetrahydrofolate binding site.

It belongs to the thymidylate synthase family. Bacterial-type ThyA subfamily. In terms of assembly, homodimer.

Its subcellular location is the cytoplasm. The enzyme catalyses dUMP + (6R)-5,10-methylene-5,6,7,8-tetrahydrofolate = 7,8-dihydrofolate + dTMP. It participates in pyrimidine metabolism; dTTP biosynthesis. In terms of biological role, catalyzes the reductive methylation of 2'-deoxyuridine-5'-monophosphate (dUMP) to 2'-deoxythymidine-5'-monophosphate (dTMP) while utilizing 5,10-methylenetetrahydrofolate (mTHF) as the methyl donor and reductant in the reaction, yielding dihydrofolate (DHF) as a by-product. This enzymatic reaction provides an intracellular de novo source of dTMP, an essential precursor for DNA biosynthesis. This Photobacterium profundum (strain SS9) protein is Thymidylate synthase.